Consider the following 389-residue polypeptide: Putative teichuronic acid biosynthesis glycosyltransferase TuaC (389 aa).

The protein belongs to the glycosyltransferase group 1 family. Glycosyltransferase 4 subfamily.

The protein operates within cell wall biogenesis; teichuronic acid biosynthesis. The protein is Putative teichuronic acid biosynthesis glycosyltransferase TuaC (tuaC) of Bacillus subtilis (strain 168).